The following is a 279-amino-acid chain: MAVVTMKQLLDSGAHFGHQTRRWNPKMKRFIFTDRNGIYIIDLQQTLTYIDSAYEFVKETVAHGGSIMFVGTKKQAQESIAQEATRVGMPYVNQRWLGGMLTNFQTVHKRLQRMKELEAMEQTGGFEGRTKKEILMLTREKNKLERSLGGIRDMAKVPSAIWVVDTNKEHLAVAEARKLNIPIIAILDTNCDPDVVDYPIPGNDDAIRSAALLTKVIASAVAEGLQARAGAGADKAEAGQDGAAAEPLAEWEQELLAGATTAAPEAAAGEAAAAPEQSS.

The interval 255–279 (LLAGATTAAPEAAAGEAAAAPEQSS) is disordered.

The protein belongs to the universal ribosomal protein uS2 family.

This is Small ribosomal subunit protein uS2 from Mycolicibacterium gilvum (strain PYR-GCK) (Mycobacterium gilvum (strain PYR-GCK)).